Consider the following 499-residue polypeptide: Aspartyl/glutamyl-tRNA(Asn/Gln) amidotransferase subunit B (499 aa).

The protein belongs to the GatB/GatE family. GatB subfamily. Heterotrimer of A, B and C subunits.

It catalyses the reaction L-glutamyl-tRNA(Gln) + L-glutamine + ATP + H2O = L-glutaminyl-tRNA(Gln) + L-glutamate + ADP + phosphate + H(+). It carries out the reaction L-aspartyl-tRNA(Asn) + L-glutamine + ATP + H2O = L-asparaginyl-tRNA(Asn) + L-glutamate + ADP + phosphate + 2 H(+). Its function is as follows. Allows the formation of correctly charged Asn-tRNA(Asn) or Gln-tRNA(Gln) through the transamidation of misacylated Asp-tRNA(Asn) or Glu-tRNA(Gln) in organisms which lack either or both of asparaginyl-tRNA or glutaminyl-tRNA synthetases. The reaction takes place in the presence of glutamine and ATP through an activated phospho-Asp-tRNA(Asn) or phospho-Glu-tRNA(Gln). This Bifidobacterium animalis subsp. lactis (strain AD011) protein is Aspartyl/glutamyl-tRNA(Asn/Gln) amidotransferase subunit B.